The sequence spans 331 residues: Inner membrane ABC transporter permease protein YjfF (331 aa).

At Met1–Asn5 the chain is on the cytoplasmic side. A helical transmembrane segment spans residues Leu6–Phe26. The Periplasmic segment spans residues Pro27 to Asn42. Residues Ala43 to Leu63 traverse the membrane as a helical segment. Over Ser64–Leu88 the chain is Cytoplasmic. A helical membrane pass occupies residues Leu89 to Ile109. The Periplasmic portion of the chain corresponds to Asp110–Lys113. Residues Ile114–Val134 traverse the membrane as a helical segment. The Cytoplasmic segment spans residues Ser135–Gly159. A helical transmembrane segment spans residues Gly160–Ala180. Topologically, residues His181–Thr222 are periplasmic. A helical membrane pass occupies residues Leu223–Val243. The Cytoplasmic segment spans residues Glu244–Ser250. The chain crosses the membrane as a helical span at residues Val251–Gly271. At Val272–Lys294 the chain is on the periplasmic side. Residues Ile295–Trp315 form a helical membrane-spanning segment. Residues Glu316–Gln331 lie on the Cytoplasmic side of the membrane.

This sequence belongs to the binding-protein-dependent transport system permease family. AraH/RbsC subfamily. In terms of assembly, the complex is composed of two ATP-binding proteins (YtfR), two transmembrane proteins (YtfT and YjfF) and a solute-binding protein (YtfQ).

The protein resides in the cell inner membrane. In terms of biological role, part of the ABC transporter complex YtfQRT-YjfF involved in galactofuranose transport. Probably responsible for the translocation of the substrate across the membrane. The sequence is that of Inner membrane ABC transporter permease protein YjfF (yjfF) from Escherichia coli (strain K12).